Here is a 543-residue protein sequence, read N- to C-terminus: Ribonuclease Y (543 aa).

A helical transmembrane segment spans residues 4-24; the sequence is IIMIPVATAIVSLLVGTVTGY. The KH domain maps to 233–296; the sequence is TVSVVDLPNE…EIAKRAMERL (64 aa). An HD domain is found at 359–452; it reads VLSHSIEVGK…VVAADTISSA (94 aa).

Belongs to the RNase Y family.

The protein resides in the cell membrane. In terms of biological role, endoribonuclease that initiates mRNA decay. The polypeptide is Ribonuclease Y (Lactobacillus acidophilus (strain ATCC 700396 / NCK56 / N2 / NCFM)).